We begin with the raw amino-acid sequence, 236 residues long: Phosphoribosylaminoimidazole-succinocarboxamide synthase (236 aa).

This sequence belongs to the SAICAR synthetase family.

It carries out the reaction 5-amino-1-(5-phospho-D-ribosyl)imidazole-4-carboxylate + L-aspartate + ATP = (2S)-2-[5-amino-1-(5-phospho-beta-D-ribosyl)imidazole-4-carboxamido]succinate + ADP + phosphate + 2 H(+). Its pathway is purine metabolism; IMP biosynthesis via de novo pathway; 5-amino-1-(5-phospho-D-ribosyl)imidazole-4-carboxamide from 5-amino-1-(5-phospho-D-ribosyl)imidazole-4-carboxylate: step 1/2. This is Phosphoribosylaminoimidazole-succinocarboxamide synthase from Akkermansia muciniphila (strain ATCC BAA-835 / DSM 22959 / JCM 33894 / BCRC 81048 / CCUG 64013 / CIP 107961 / Muc).